An 868-amino-acid chain; its full sequence is DNA mismatch repair protein MutS (868 aa).

Position 623–630 (623–630 (GPNMAGKS)) interacts with ATP.

This sequence belongs to the DNA mismatch repair MutS family.

Functionally, this protein is involved in the repair of mismatches in DNA. It is possible that it carries out the mismatch recognition step. This protein has a weak ATPase activity. In Magnetococcus marinus (strain ATCC BAA-1437 / JCM 17883 / MC-1), this protein is DNA mismatch repair protein MutS.